The sequence spans 270 residues: Formamidopyrimidine-DNA glycosylase (270 aa).

Catalysis depends on Pro-2, which acts as the Schiff-base intermediate with DNA. The active-site Proton donor is Glu-3. Catalysis depends on Lys-58, which acts as the Proton donor; for beta-elimination activity. DNA-binding residues include His-90, Arg-109, and Arg-152. The segment at 237 to 270 (RVYGREGEPCQCGGVVKRIVQGGRSTFFCPRCQK) adopts an FPG-type zinc-finger fold. The active-site Proton donor; for delta-elimination activity is Arg-260.

This sequence belongs to the FPG family. In terms of assembly, monomer. Zn(2+) serves as cofactor.

The catalysed reaction is Hydrolysis of DNA containing ring-opened 7-methylguanine residues, releasing 2,6-diamino-4-hydroxy-5-(N-methyl)formamidopyrimidine.. It catalyses the reaction 2'-deoxyribonucleotide-(2'-deoxyribose 5'-phosphate)-2'-deoxyribonucleotide-DNA = a 3'-end 2'-deoxyribonucleotide-(2,3-dehydro-2,3-deoxyribose 5'-phosphate)-DNA + a 5'-end 5'-phospho-2'-deoxyribonucleoside-DNA + H(+). Its function is as follows. Involved in base excision repair of DNA damaged by oxidation or by mutagenic agents. Acts as a DNA glycosylase that recognizes and removes damaged bases. Has a preference for oxidized purines, such as 7,8-dihydro-8-oxoguanine (8-oxoG). Has AP (apurinic/apyrimidinic) lyase activity and introduces nicks in the DNA strand. Cleaves the DNA backbone by beta-delta elimination to generate a single-strand break at the site of the removed base with both 3'- and 5'-phosphates. The protein is Formamidopyrimidine-DNA glycosylase of Novosphingobium aromaticivorans (strain ATCC 700278 / DSM 12444 / CCUG 56034 / CIP 105152 / NBRC 16084 / F199).